We begin with the raw amino-acid sequence, 195 residues long: COMM domain-containing protein 3 (195 aa).

Residues 124–193 (HITDVSWRLE…DASKSLERAT (70 aa)) form the COMM domain.

It belongs to the COMM domain-containing protein 3 family. In terms of assembly, component of the commander complex consisting of the CCC subcomplex and the retriever subcomplex. Component of the CCC (COMMD/CCDC22/CCDC93) subcomplex consisting of COMMD1, COMMD2, COMMD3, COMMD4, COMMD5, COMMD6, COMMD7, COMMD8, COMMD9, COMMD10, CCDC22 and CCDC93; within the complex forms a heterodimer with COMMD2. Interacts with NFKB1/p105. Interacts with CCDC22, CCDC93, SCNN1B, CUL3, CUL4A, CUL4B, CUL5. In terms of tissue distribution, widely expressed with highest expression in thymus.

It localises to the cytoplasm. The protein resides in the nucleus. Functionally, scaffold protein in the commander complex that is essential for endosomal recycling of transmembrane cargos; the commander complex is composed of the CCC subcomplex and the retriever subcomplex. May modulate activity of cullin-RING E3 ubiquitin ligase (CRL) complexes. May down-regulate activation of NF-kappa-B. Modulates Na(+) transport in epithelial cells by regulation of apical cell surface expression of amiloride-sensitive sodium channel (ENaC) subunits. This Homo sapiens (Human) protein is COMM domain-containing protein 3 (COMMD3).